The chain runs to 253 residues: Phycoerythrobilin:ferredoxin oxidoreductase (253 aa).

The protein belongs to the HY2 family.

It catalyses the reaction (3Z)-phycoerythrobilin + oxidized 2[4Fe-4S]-[ferredoxin] = 15,16-dihydrobiliverdin + reduced 2[4Fe-4S]-[ferredoxin] + 2 H(+). In terms of biological role, catalyzes the two-electron reduction of the C2 and C3(1) diene system of 15,16-dihydrobiliverdin. In Prochlorococcus marinus (strain MIT 9215), this protein is Phycoerythrobilin:ferredoxin oxidoreductase (pebB).